We begin with the raw amino-acid sequence, 728 residues long: Catalase-peroxidase 1 (728 aa).

Residues 91-218 constitute a cross-link (tryptophyl-tyrosyl-methioninium (Trp-Tyr) (with M-244)); that stretch reads WHSAGTYRTA…LAAVQMGLIY (128 aa). The active-site Proton acceptor is the histidine 92. The segment at residues 218–244 is a cross-link (tryptophyl-tyrosyl-methioninium (Tyr-Met) (with W-91)); that stretch reads YVNPEGPDGNPDPVAAAHDIRETFARM. Histidine 259 contributes to the heme b binding site.

This sequence belongs to the peroxidase family. Peroxidase/catalase subfamily. As to quaternary structure, homodimer or homotetramer. The cofactor is heme b. In terms of processing, formation of the three residue Trp-Tyr-Met cross-link is important for the catalase, but not the peroxidase activity of the enzyme.

The enzyme catalyses H2O2 + AH2 = A + 2 H2O. It catalyses the reaction 2 H2O2 = O2 + 2 H2O. In terms of biological role, bifunctional enzyme with both catalase and broad-spectrum peroxidase activity. The polypeptide is Catalase-peroxidase 1 (Burkholderia cenocepacia (strain ATCC BAA-245 / DSM 16553 / LMG 16656 / NCTC 13227 / J2315 / CF5610) (Burkholderia cepacia (strain J2315))).